A 354-amino-acid polypeptide reads, in one-letter code: Elongation factor Ts, mitochondrial (354 aa).

The transit peptide at 1–47 (MMRSTLSLLQKCRLPNNNGSLLSFKNNQVVNQTALFSMKSNQQYRFY) directs the protein to the mitochondrion.

This sequence belongs to the EF-Ts family.

The protein localises to the mitochondrion. Associates with the EF-Tu.GDP complex and induces the exchange of GDP to GTP. It remains bound to the aminoacyl-tRNA.EF-Tu.GTP complex up to the GTP hydrolysis stage on the ribosome. This chain is Elongation factor Ts, mitochondrial (tsfm), found in Heterostelium pallidum (strain ATCC 26659 / Pp 5 / PN500) (Cellular slime mold).